The following is a 1220-amino-acid chain: Plasma membrane calcium-transporting ATPase 1 (1220 aa).

Residue glycine 2 is modified to N-acetylglycine. The Cytoplasmic segment spans residues 2–105; sequence GDMANNSVAY…KTFLQLVWEA (104 aa). 2 positions are modified to phosphoserine: serine 8 and serine 17. Residues 106–126 traverse the membrane as a helical segment; that stretch reads LQDVTLIILEIAAIVSLGLSF. The Extracellular portion of the chain corresponds to 127–154; it reads YQPPEGDNALCGEVSVGEEEGEGETGWI. Residues 155–175 form a helical membrane-spanning segment; sequence EGAAILLSVVCVVLVTAFNDW. Residues 176–366 lie on the Cytoplasmic side of the membrane; that stretch reads SKEKQFRGLQ…KEKSVLQGKL (191 aa). Positions 297-356 are disordered; that stretch reads EEEKKDEKKKEKKNKKQDGAIENRNKAKAQDGAAMEMQPLKSEEGGDGDEKDKKKANLPK. 2 stretches are compositionally biased toward basic and acidic residues: residues 312–325 and 337–356; these read KQDG…KAKA and KSEE…NLPK. Residue serine 338 is modified to Phosphoserine. The chain crosses the membrane as a helical span at residues 367–386; the sequence is TKLAVQIGKAGLLMSAITVI. The Extracellular segment spans residues 387–418; it reads ILVLYFVIDTFWVQKRPWLAECTPIYIQYFVK. A helical transmembrane segment spans residues 419–439; sequence FFIIGVTVLVVAVPEGLPLAV. The Cytoplasmic portion of the chain corresponds to 440–855; that stretch reads TISLAYSVKK…RNVYDSISKF (416 aa). The 4-aspartylphosphate intermediate role is filled by aspartate 475. Mg(2+)-binding residues include aspartate 475, threonine 477, and aspartate 797. A helical membrane pass occupies residues 856–876; it reads LQFQLTVNVVAVIVAFTGACI. The Extracellular portion of the chain corresponds to 877 to 882; sequence TQDSPL. Residues 883 to 903 traverse the membrane as a helical segment; it reads KAVQMLWVNLIMDTLASLALA. Topologically, residues 904-927 are cytoplasmic; the sequence is TEPPTESLLLRKPYGRNKPLISRT. The chain crosses the membrane as a helical span at residues 928-948; that stretch reads MMKNILGHAFYQLVVVFTLLF. Residues 949–971 lie on the Extracellular side of the membrane; it reads AGEKFFDIDSGRNAPLHAPPSEH. The helical transmembrane segment at 972-991 threads the bilayer; that stretch reads YTIVFNTFVLMQLFNEINAR. The Cytoplasmic portion of the chain corresponds to 992–1005; that stretch reads KIHGERNVFEGIFN. A helical transmembrane segment spans residues 1006–1027; the sequence is NAIFCTIVLGTFVVQIIIVQFG. The Extracellular segment spans residues 1028–1039; sequence GKPFSCSELSIE. Residues 1040 to 1060 traverse the membrane as a helical segment; sequence QWLWSIFLGMGTLLWGQLIST. The Cytoplasmic segment spans residues 1061-1220; that stretch reads IPTSRLKFLK…SPLHSLETSL (160 aa). The tract at residues 1100-1117 is calmodulin-binding subdomain A; sequence LRRGQILWFRGLNRIQTQ. Threonine 1116 bears the Phosphothreonine; by PKC mark. The tract at residues 1118–1220 is required for basolateral membrane targeting; that stretch reads IRVVNAFRSS…SPLHSLETSL (103 aa). Residues serine 1140 and serine 1155 each carry the phosphoserine modification. Residues 1162–1220 are disordered; that stretch reads IDDTDAEDDAPTKRNSSPPPSPNKNNNAVDSGIHLTIEMNKSATSSSPGSPLHSLETSL. Threonine 1165 is modified (phosphothreonine). Phosphoserine; by PKA is present on serine 1177. A phosphoserine mark is found at serine 1178 and serine 1182. Polar residues predominate over residues 1200–1220; sequence MNKSATSSSPGSPLHSLETSL.

The protein belongs to the cation transport ATPase (P-type) (TC 3.A.3) family. Type IIB subfamily. Monomer. Dimer. Oligomer. Calmodulin binding. Interacts with PDZD11. Interacts with SLC35G1 and STIM1. Interacts with YWHAE; interacts with the monomeric and dimeric forms of the YWHAE but prefer the monomer form; this interaction inhibits calcium-transporting ATPase activity. Interacts with NPTN; this interaction stabilizes ATP2B1 and increases ATPase activity; this interaction controls T cell calcium homeostasis following T cell activation. Interacts with EPB41; regulates small intestinal calcium absorption through regulation of membrane expression of ATP2B1. Isoform B is ubiquitously expressed. Isoforms A and E have only been found in brain cortex. Isoform C is found in brain cortex, skeletal muscle and heart muscle. Isoform D has only been found in fetal skeletal muscle. Isoform K has been found in small intestine and liver. Isoform B is expressed in hair cells of inner ear.

It is found in the cell membrane. It localises to the basolateral cell membrane. The protein localises to the synapse. Its subcellular location is the presynaptic cell membrane. The protein resides in the cytoplasmic vesicle. It is found in the secretory vesicle. It localises to the synaptic vesicle membrane. It carries out the reaction Ca(2+)(in) + ATP + H2O = Ca(2+)(out) + ADP + phosphate + H(+). In terms of biological role, catalyzes the hydrolysis of ATP coupled with the transport of calcium from the cytoplasm to the extracellular space thereby maintaining intracellular calcium homeostasis. Plays a role in blood pressure regulation through regulation of intracellular calcium concentration and nitric oxide production leading to regulation of vascular smooth muscle cells vasoconstriction. Positively regulates bone mineralization through absorption of calcium from the intestine. Plays dual roles in osteoclast differentiation and survival by regulating RANKL-induced calcium oscillations in preosteoclasts and mediating calcium extrusion in mature osteoclasts. Regulates insulin sensitivity through calcium/calmodulin signaling pathway by regulating AKT1 activation and NOS3 activation in endothelial cells. May play a role in synaptic transmission by modulating calcium and proton dynamics at the synaptic vesicles. The protein is Plasma membrane calcium-transporting ATPase 1 of Rattus norvegicus (Rat).